A 61-amino-acid polypeptide reads, in one-letter code: Photosystem II reaction center protein K (61 aa).

Positions 1-24 (MPNIFSLICICLNSALQPSGFFFA) are excised as a propeptide. Residues 36–56 (IVDFMPVIPVLFFLLAFVWQA) traverse the membrane as a helical segment.

Belongs to the PsbK family. In terms of assembly, PSII is composed of 1 copy each of membrane proteins PsbA, PsbB, PsbC, PsbD, PsbE, PsbF, PsbH, PsbI, PsbJ, PsbK, PsbL, PsbM, PsbT, PsbX, PsbY, PsbZ, Psb30/Ycf12, at least 3 peripheral proteins of the oxygen-evolving complex and a large number of cofactors. It forms dimeric complexes.

Its subcellular location is the plastid. It localises to the chloroplast thylakoid membrane. In terms of biological role, one of the components of the core complex of photosystem II (PSII). PSII is a light-driven water:plastoquinone oxidoreductase that uses light energy to abstract electrons from H(2)O, generating O(2) and a proton gradient subsequently used for ATP formation. It consists of a core antenna complex that captures photons, and an electron transfer chain that converts photonic excitation into a charge separation. This is Photosystem II reaction center protein K from Nymphaea alba (White water-lily).